The primary structure comprises 137 residues: Ribosome-binding factor A (137 aa).

It belongs to the RbfA family. In terms of assembly, monomer. Binds 30S ribosomal subunits, but not 50S ribosomal subunits or 70S ribosomes.

It is found in the cytoplasm. One of several proteins that assist in the late maturation steps of the functional core of the 30S ribosomal subunit. Associates with free 30S ribosomal subunits (but not with 30S subunits that are part of 70S ribosomes or polysomes). Required for efficient processing of 16S rRNA. May interact with the 5'-terminal helix region of 16S rRNA. In Synechococcus sp. (strain ATCC 27144 / PCC 6301 / SAUG 1402/1) (Anacystis nidulans), this protein is Ribosome-binding factor A.